An 89-amino-acid polypeptide reads, in one-letter code: Small ribosomal subunit protein uS17 (89 aa).

It belongs to the universal ribosomal protein uS17 family. Part of the 30S ribosomal subunit.

In terms of biological role, one of the primary rRNA binding proteins, it binds specifically to the 5'-end of 16S ribosomal RNA. The chain is Small ribosomal subunit protein uS17 from Phytoplasma mali (strain AT).